The primary structure comprises 786 residues: LPS-assembly protein LptD (786 aa).

A signal peptide spans 1-24 (MSFTSRSLLASFTGCLLYGTPAIA).

It belongs to the LptD family. Component of the lipopolysaccharide transport and assembly complex. Interacts with LptE and LptA.

It localises to the cell outer membrane. Functionally, together with LptE, is involved in the assembly of lipopolysaccharide (LPS) at the surface of the outer membrane. This is LPS-assembly protein LptD from Aliivibrio fischeri (strain ATCC 700601 / ES114) (Vibrio fischeri).